A 291-amino-acid chain; its full sequence is MEMO1 family protein PH1626 (291 aa).

Belongs to the MEMO1 family.

This is MEMO1 family protein PH1626 from Pyrococcus horikoshii (strain ATCC 700860 / DSM 12428 / JCM 9974 / NBRC 100139 / OT-3).